Consider the following 348-residue polypeptide: Rhodopsin (348 aa).

Methionine 1 bears the N-acetylmethionine mark. Over 1–36 (MNGTEGPDFYIPMSNQTGVVRSPFEYPQYYLAEPWQ) the chain is Extracellular. N-linked (GlcNAc...) asparagine glycosylation is found at asparagine 2 and asparagine 15. A helical membrane pass occupies residues 37-61 (FSMLAAYMFLLIVLGFPINFLTLYV). At 62 to 73 (TVQHKKLRTPLN) the chain is on the cytoplasmic side. A helical transmembrane segment spans residues 74 to 96 (YILLNLAVADLFMVLGGFTTTLY). At 97-110 (TSLHGYFVFGPTGC) the chain is on the extracellular side. Cysteine 110 and cysteine 187 are oxidised to a cystine. Residues 111 to 133 (NVEGFFATLGGEIALWSLVVLAI) form a helical membrane-spanning segment. Positions 134–136 (ERY) match the 'Ionic lock' involved in activated form stabilization motif. Over 134–152 (ERYVVVCKPMSNFRFGENH) the chain is Cytoplasmic. A helical membrane pass occupies residues 153-173 (AIMGVAFTWIMALACAAPPLV). Residues 174 to 202 (GWSRYIPEGMQCSCGIDYYTLKPEVNNES) lie on the Extracellular side of the membrane. Glutamate 201 contacts Zn(2+). The chain crosses the membrane as a helical span at residues 203–224 (FVIYMFVVHFTIPLIIIFFCYG). Residues 225 to 252 (QLVFTVKEAAAQQQESATTQKAEKEVTR) lie on the Cytoplasmic side of the membrane. A helical membrane pass occupies residues 253-274 (MVIIMVIAFLICWVPYASVAFY). The Extracellular segment spans residues 275-286 (IFTHQGSNFGPI). Glutamine 279 is a Zn(2+) binding site. A helical membrane pass occupies residues 287 to 308 (FMTIPAFFAKSSSIYNPVIYIM). Lysine 296 is subject to N6-(retinylidene)lysine. Topologically, residues 309–348 (MNKQFRNCMLTTICCGKNPLGDDEASATASKTETSQVAPA) are cytoplasmic. S-palmitoyl cysteine attachment occurs at residues cysteine 322 and cysteine 323. Residues 330-348 (DDEASATASKTETSQVAPA) are interaction with SAG. Position 334 is a phosphoserine (serine 334). The residue at position 336 (threonine 336) is a Phosphothreonine. Phosphoserine is present on serine 338. Threonine 340 and threonine 342 each carry phosphothreonine. Position 343 is a phosphoserine (serine 343).

This sequence belongs to the G-protein coupled receptor 1 family. Opsin subfamily. In terms of assembly, homodimer. May form a complex composed of RHO, GRK1 and RCVRN in a Ca(2+)-dependent manner; RCVRN prevents the interaction between GRK1 and RHO. Interacts with GRK1. Interacts (phosphorylated form) with SAG. Interacts with GNAT1. Interacts with GNAT3. SAG and G-proteins compete for a common binding site. Interacts with PRCD; the interaction promotes PRCD stability. Forms a complex with ASAP1 and ARF4. Forms a complex with ASAP1, RAB11A, Rabin8/RAB3IP, ARF4 and RAB11FIP3; the complex regulates Golgi-to-cilia rhodopsin/RHO transport in photoreceptors. Phosphorylated on some or all of the serine and threonine residues present in the C-terminal region. Post-translationally, contains one covalently linked retinal chromophore. Upon light absorption, the covalently bound 11-cis-retinal is converted to all-trans-retinal. After hydrolysis of the Schiff base and release of the covalently bound all-trans-retinal, active rhodopsin is regenerated by binding of a fresh molecule of 11-cis-retinal.

The protein localises to the membrane. It localises to the cell projection. The protein resides in the cilium. Its subcellular location is the photoreceptor outer segment. Functionally, photoreceptor required for image-forming vision at low light intensity. Required for photoreceptor cell viability after birth. Light-induced isomerization of 11-cis to all-trans retinal triggers a conformational change that activates signaling via G-proteins. Subsequent receptor phosphorylation mediates displacement of the bound G-protein alpha subunit by the arrestin SAG and terminates signaling. This is Rhodopsin (RHO) from Oryctolagus cuniculus (Rabbit).